The following is a 358-amino-acid chain: Mitogen-activated protein kinase 1 (358 aa).

Ala-2 carries the N-acetylalanine modification. Residues 23-311 (YTNLSYIGEG…VEQALAHPYL (289 aa)) form the Protein kinase domain. Ser-27 is modified (phosphoserine; by SGK1). ATP is bound by residues 29 to 37 (IGEGAYGMV) and Lys-52. Residue Asp-147 is the Proton acceptor of the active site. Thr-183 carries the post-translational modification Phosphothreonine; by MAP2K1 and MAP2K2. The TXY signature appears at 183–185 (TEY). Tyr-185 is subject to Phosphotyrosine; by MAP2K1 and MAP2K2. A Phosphothreonine; by autocatalysis modification is found at Thr-188. Ser-244, Ser-246, and Ser-282 each carry phosphoserine.

Belongs to the protein kinase superfamily. CMGC Ser/Thr protein kinase family. MAP kinase subfamily. In terms of assembly, binds both upstream activators and downstream substrates in multimolecular complexes. This interaction inhibits its tyrosine-kinase activity. Interacts with ADAM15, ARHGEF2, ARRB2, DAPK1 (via death domain), HSF4, IER3, IPO7, NISCH, SGK1, and isoform 1 of NEK2. Interacts (via phosphorylated form) with TPR (via C-terminal region and phosphorylated form); the interaction requires dimerization of MAPK1/ERK2 and increases following EGF stimulation. Interacts with MAP2K1. Interacts with DUSP6. Interacts (phosphorylated form) with CAV2 ('Tyr-19'-phosphorylated form); the interaction, promoted by insulin, leads to nuclear location and MAPK1 activation. Interacts with DCC. Interacts with MORG1. Interacts with PEA15. Interacts with MKNK2. MKNK2 isoform 1 binding prevents from dephosphorylation and inactivation. The phosphorylated form interacts with PML. Interacts with STYX. Interacts with CDK2AP2. Interacts with CAVIN4. Interacts with DUSP7; the interaction enhances DUSP7 phosphatase activity. Interacts with GIT1; this interaction is necessary for MAPK1 localization to focal adhesions. Interacts with ZNF263. Interacts with phosphoglycerate kinase PGK1; the interaction is direct, occurs under hypoxic conditions, and promotes interaction between PGK1 and PIN1. Mg(2+) serves as cofactor. Post-translationally, dually phosphorylated on Thr-183 and Tyr-185, which activates the enzyme. Ligand-activated ALK induces tyrosine phosphorylation. Dephosphorylated by PTPRJ at Tyr-185. Phosphorylated upon FLT3 and KIT signaling. Dephosphorylated by DUSP1 and DUSP2 at Thr-183 and Tyr-185. ISGylated. In terms of processing, ubiquitinated by TRIM15 via 'Lys-63'-linked ubiquitination; leading to activation. Deubiquitinated by CYLD. Widely expressed.

It localises to the cytoplasm. Its subcellular location is the cytoskeleton. It is found in the spindle. The protein resides in the nucleus. The protein localises to the microtubule organizing center. It localises to the centrosome. Its subcellular location is the membrane. It is found in the caveola. The protein resides in the cell junction. The protein localises to the focal adhesion. It catalyses the reaction L-seryl-[protein] + ATP = O-phospho-L-seryl-[protein] + ADP + H(+). The enzyme catalyses L-threonyl-[protein] + ATP = O-phospho-L-threonyl-[protein] + ADP + H(+). Its activity is regulated as follows. Phosphorylated by MAP2K1/MEK1 and MAP2K2/MEK2 on Thr-183 and Tyr-185 in response to external stimuli like insulin or NGF. Both phosphorylations are required for activity. This phosphorylation causes dramatic conformational changes, which enable full activation and interaction of MAPK1/ERK2 with its substrates. Phosphorylation on Ser-27 by SGK1 results in its activation by enhancing its interaction with MAP2K1/MEK1 and MAP2K2/MEK2. Dephosphorylated and inactivated by DUSP1, DUSP3, DUSP6 and DUSP9. Inactivated by pyrimidylpyrrole inhibitors. Functionally, serine/threonine kinase which acts as an essential component of the MAP kinase signal transduction pathway. MAPK1/ERK2 and MAPK3/ERK1 are the 2 MAPKs which play an important role in the MAPK/ERK cascade. They participate also in a signaling cascade initiated by activated KIT and KITLG/SCF. Depending on the cellular context, the MAPK/ERK cascade mediates diverse biological functions such as cell growth, adhesion, survival and differentiation through the regulation of transcription, translation, cytoskeletal rearrangements. The MAPK/ERK cascade also plays a role in initiation and regulation of meiosis, mitosis, and postmitotic functions in differentiated cells by phosphorylating a number of transcription factors. About 160 substrates have already been discovered for ERKs. Many of these substrates are localized in the nucleus, and seem to participate in the regulation of transcription upon stimulation. However, other substrates are found in the cytosol as well as in other cellular organelles, and those are responsible for processes such as translation, mitosis and apoptosis. Moreover, the MAPK/ERK cascade is also involved in the regulation of the endosomal dynamics, including lysosome processing and endosome cycling through the perinuclear recycling compartment (PNRC); as well as in the fragmentation of the Golgi apparatus during mitosis. The substrates include transcription factors (such as ATF2, BCL6, ELK1, ERF, FOS, HSF4 or SPZ1), cytoskeletal elements (such as CANX, CTTN, GJA1, MAP2, MAPT, PXN, SORBS3 or STMN1), regulators of apoptosis (such as BAD, BTG2, CASP9, DAPK1, IER3, MCL1 or PPARG), regulators of translation (such as EIF4EBP1 and FXR1) and a variety of other signaling-related molecules (like ARHGEF2, DCC, FRS2 or GRB10). Protein kinases (such as RAF1, RPS6KA1/RSK1, RPS6KA3/RSK2, RPS6KA2/RSK3, RPS6KA6/RSK4, SYK, MKNK1/MNK1, MKNK2/MNK2, RPS6KA5/MSK1, RPS6KA4/MSK2, MAPKAPK3 or MAPKAPK5) and phosphatases (such as DUSP1, DUSP4, DUSP6 or DUSP16) are other substrates which enable the propagation the MAPK/ERK signal to additional cytosolic and nuclear targets, thereby extending the specificity of the cascade. Mediates phosphorylation of TPR in response to EGF stimulation. May play a role in the spindle assembly checkpoint. Phosphorylates PML and promotes its interaction with PIN1, leading to PML degradation. Phosphorylates CDK2AP2. Phosphorylates phosphoglycerate kinase PGK1 under hypoxic conditions to promote its targeting to the mitochondrion and suppress the formation of acetyl-coenzyme A from pyruvate. Acts as a transcriptional repressor. Binds to a [GC]AAA[GC] consensus sequence. Repress the expression of interferon gamma-induced genes. Seems to bind to the promoter of CCL5, DMP1, IFIH1, IFITM1, IRF7, IRF9, LAMP3, OAS1, OAS2, OAS3 and STAT1. Transcriptional activity is independent of kinase activity. The protein is Mitogen-activated protein kinase 1 of Mus musculus (Mouse).